A 746-amino-acid polypeptide reads, in one-letter code: Proline--tRNA ligase (746 aa).

Residues 1 to 223 (MNNNTNGEII…NSNNNNNNNN (223 aa)) form a required for editing of incorrectly charged tRNA region. Residues 181 to 201 (TSKARVDKKEDVQEEMAKNEE) are compositionally biased toward basic and acidic residues. Residues 181–226 (TSKARVDKKEDVQEEMAKNEELQNNNNNNKNNSNSNNNNNNNNNHI) are disordered. A compositionally biased stretch (low complexity) spans 204–224 (NNNNNNKNNSNSNNNNNNNNN). R390 is an L-proline binding site. ATP contacts are provided by residues 390–394 (RWEFK), 401–405 (RTREF), and 475–477 (QAA). H480 is an L-proline binding site. 512-514 (TTR) is a binding site for ATP.

Belongs to the class-II aminoacyl-tRNA synthetase family. ProS type 3 subfamily. As to quaternary structure, homodimer.

It localises to the cytoplasm. The enzyme catalyses tRNA(Pro) + L-proline + ATP = L-prolyl-tRNA(Pro) + AMP + diphosphate. Its activity is regulated as follows. Inhibited by the quinazolinone-based compound febrifugine from the Chinese plant Dichroa febrifuga which is used to treat malaria-associated fever. Also inhibited by febrifugine derivatives such as halofuginone. Catalyzes the attachment of proline to tRNA(Pro) in a two-step reaction: proline is first activated by ATP to form Pro-AMP and then transferred to the acceptor end of tRNA(Pro). Functions in trans to edit the amino acid moiety from incorrectly charged Ala-tRNA(Pro). Has no activity on correctly charged Pro-tRNA(Pro) or Ala-tRNA(Ala). The polypeptide is Proline--tRNA ligase (Plasmodium falciparum (isolate 3D7)).